A 180-amino-acid chain; its full sequence is Der GTPase-activating protein YihI (180 aa).

Disordered regions lie at residues 1-90 (MSRK…QERR) and 145-180 (EPEE…DYKG). The segment covering 23-32 (NRTESDVEGR) has biased composition (basic and acidic residues). Over residues 33–43 (LRKRAKKRKGL) the composition is skewed to basic residues. Basic and acidic residues-rich tracts occupy residues 50–68 (SDAE…DPRL) and 80–90 (PVKKQTKQERR). Acidic residues predominate over residues 165–180 (DLLADFDDINFDDYKG).

The protein belongs to the YihI family. In terms of assembly, interacts with Der.

Functionally, a GTPase-activating protein (GAP) that modifies Der/EngA GTPase function. May play a role in ribosome biogenesis. This is Der GTPase-activating protein YihI from Vibrio campbellii (strain ATCC BAA-1116).